The chain runs to 192 residues: UPF0462 protein C4orf33 homolog (192 aa).

Belongs to the UPF0462 family.

The protein is UPF0462 protein C4orf33 homolog (D3Ertd751e) of Mus musculus (Mouse).